The following is a 166-amino-acid chain: Large ribosomal subunit protein uL10 (166 aa).

Belongs to the universal ribosomal protein uL10 family. In terms of assembly, part of the ribosomal stalk of the 50S ribosomal subunit. The N-terminus interacts with L11 and the large rRNA to form the base of the stalk. The C-terminus forms an elongated spine to which L12 dimers bind in a sequential fashion forming a multimeric L10(L12)X complex.

Forms part of the ribosomal stalk, playing a central role in the interaction of the ribosome with GTP-bound translation factors. The chain is Large ribosomal subunit protein uL10 from Tropheryma whipplei (strain TW08/27) (Whipple's bacillus).